The sequence spans 488 residues: Protein nucleotidyltransferase YdiU (488 aa).

Residues glycine 90, glycine 92, arginine 93, lysine 113, aspartate 125, glycine 126, arginine 176, and arginine 183 each coordinate ATP. Catalysis depends on aspartate 252, which acts as the Proton acceptor. Positions 253 and 262 each coordinate Mg(2+). Residue aspartate 262 participates in ATP binding.

It belongs to the SELO family. It depends on Mg(2+) as a cofactor. The cofactor is Mn(2+).

It carries out the reaction L-seryl-[protein] + ATP = 3-O-(5'-adenylyl)-L-seryl-[protein] + diphosphate. The catalysed reaction is L-threonyl-[protein] + ATP = 3-O-(5'-adenylyl)-L-threonyl-[protein] + diphosphate. The enzyme catalyses L-tyrosyl-[protein] + ATP = O-(5'-adenylyl)-L-tyrosyl-[protein] + diphosphate. It catalyses the reaction L-histidyl-[protein] + UTP = N(tele)-(5'-uridylyl)-L-histidyl-[protein] + diphosphate. It carries out the reaction L-seryl-[protein] + UTP = O-(5'-uridylyl)-L-seryl-[protein] + diphosphate. The catalysed reaction is L-tyrosyl-[protein] + UTP = O-(5'-uridylyl)-L-tyrosyl-[protein] + diphosphate. Functionally, nucleotidyltransferase involved in the post-translational modification of proteins. It can catalyze the addition of adenosine monophosphate (AMP) or uridine monophosphate (UMP) to a protein, resulting in modifications known as AMPylation and UMPylation. This chain is Protein nucleotidyltransferase YdiU, found in Thiobacillus denitrificans (strain ATCC 25259 / T1).